The following is a 522-amino-acid chain: uncharacterized protein (522 aa).

Low complexity predominate over residues 1 to 11; the sequence is MSSITSRVSSR. Residues 1–20 are disordered; it reads MSSITSRVSSRSSHELTEKK. Helical transmembrane passes span 69 to 89, 116 to 136, 141 to 161, 173 to 193, 204 to 224, 236 to 256, 303 to 323, 338 to 358, 367 to 387, 396 to 416, 428 to 448, and 462 to 482; these read VLWKIDLVMMPVMCITYMIQY, SMTTLFYAGYLVAQYPAAILM, LSYFIFCNVFLWSAMVCLMAA, FLAGIFEASITPAFINITAMW, LCWYAFNGIAQIIGSILSYGL, YVFIVIGLMSLGWGVVFVFIP, VIMITLFTGVCMITNGIGVFS, AVLNMPLGAIEVAAMFISGVL, LLIGVFMNCLTLAGCLMIWKI, LVGVWFTMWVPASSALLLSLI, VTSATVFVFYSVGNIVSPQLF, and AMIVSLCIIIAIAFVLTGYYI.

Belongs to the major facilitator superfamily. Allantoate permease family.

It is found in the endoplasmic reticulum. It localises to the membrane. This is an uncharacterized protein from Schizosaccharomyces pombe (strain 972 / ATCC 24843) (Fission yeast).